The sequence spans 171 residues: ATP synthase subunit b (171 aa).

A helical membrane pass occupies residues 26 to 46 (INLVLVIALLVYFLKGFLGGI).

It belongs to the ATPase B chain family. As to quaternary structure, F-type ATPases have 2 components, F(1) - the catalytic core - and F(0) - the membrane proton channel. F(1) has five subunits: alpha(3), beta(3), gamma(1), delta(1), epsilon(1). F(0) has four main subunits: a(1), b(1), b'(1) and c(10-14). The alpha and beta chains form an alternating ring which encloses part of the gamma chain. F(1) is attached to F(0) by a central stalk formed by the gamma and epsilon chains, while a peripheral stalk is formed by the delta, b and b' chains.

The protein resides in the cellular thylakoid membrane. Its function is as follows. F(1)F(0) ATP synthase produces ATP from ADP in the presence of a proton or sodium gradient. F-type ATPases consist of two structural domains, F(1) containing the extramembraneous catalytic core and F(0) containing the membrane proton channel, linked together by a central stalk and a peripheral stalk. During catalysis, ATP synthesis in the catalytic domain of F(1) is coupled via a rotary mechanism of the central stalk subunits to proton translocation. Functionally, component of the F(0) channel, it forms part of the peripheral stalk, linking F(1) to F(0). In Synechococcus sp. (strain RCC307), this protein is ATP synthase subunit b.